The following is a 117-amino-acid chain: Immunoglobulin lambda variable 1-51 (117 aa).

An N-terminal signal peptide occupies residues 1-19 (MTCSPLLLTLLIHCTGSWA). Gln20 carries the post-translational modification Pyrrolidone carboxylic acid. Residues 20 to 44 (QSVLTQPPSVSAAPGQKVTISCSGS) form a framework-1 region. Residues 20–117 (QSVLTQPPSV…CGTWDSSLSA (98 aa)) enclose the Ig-like domain. Cysteines 41 and 108 form a disulfide. Positions 45–52 (SSNIGNNY) are complementarity-determining-1. Residues 53–69 (VSWYQQLPGTAPKLLIY) form a framework-2 region. The interval 70–72 (DNN) is complementarity-determining-2. Positions 73–108 (KRPSGIPDRFSGSKSGTSATLGITGLQTGDEADYYC) are framework-3. Positions 109 to 117 (GTWDSSLSA) are complementarity-determining-3.

As to quaternary structure, immunoglobulins are composed of two identical heavy chains and two identical light chains; disulfide-linked.

The protein localises to the secreted. It localises to the cell membrane. Its function is as follows. V region of the variable domain of immunoglobulin light chains that participates in the antigen recognition. Immunoglobulins, also known as antibodies, are membrane-bound or secreted glycoproteins produced by B lymphocytes. In the recognition phase of humoral immunity, the membrane-bound immunoglobulins serve as receptors which, upon binding of a specific antigen, trigger the clonal expansion and differentiation of B lymphocytes into immunoglobulins-secreting plasma cells. Secreted immunoglobulins mediate the effector phase of humoral immunity, which results in the elimination of bound antigens. The antigen binding site is formed by the variable domain of one heavy chain, together with that of its associated light chain. Thus, each immunoglobulin has two antigen binding sites with remarkable affinity for a particular antigen. The variable domains are assembled by a process called V-(D)-J rearrangement and can then be subjected to somatic hypermutations which, after exposure to antigen and selection, allow affinity maturation for a particular antigen. This is Immunoglobulin lambda variable 1-51 from Homo sapiens (Human).